The sequence spans 447 residues: MIKIKKGLDLPIAGAPAQVIEDGKPVTQVALIGFDYNGMKPTMEVKVGDRVKCGQLLFTDKKTEGVRYTSPASGVVSAVNRGERRVFQSIVIDIEGDDSEQFAQFSPEELPNLSREQVVENLVGSGEWTALRTRPYSKAPAIDAEPHSIFVTAMDSHPLSADPAVIINEAKADFKNGLVVLGKLTRGKVFVCARAGVNYDLPSGSNAVQEQFDGPHPAGLAGTHIHYLDPVNASKFVWTIGYQDVIAIGRLFTSGRKSVERVVALAGPMVSKPRLLRTRTGASLAQLTEGELKSSDVRLISGSVLGGRNAKGNVSFLGRFANQISCLEEGYKREFMGWLSPGSNKYSLLNIYLSKLNPGKLFNFTTTTNGSERAMVPVGSYEKVMPLDILPTQLLRSLVVGDTEMAQKLGCLELDEEDLSLCTFVCPGKYEYGPILRDSLTRIEKEG.

This sequence belongs to the NqrA family. As to quaternary structure, composed of six subunits; NqrA, NqrB, NqrC, NqrD, NqrE and NqrF.

The catalysed reaction is a ubiquinone + n Na(+)(in) + NADH + H(+) = a ubiquinol + n Na(+)(out) + NAD(+). In terms of biological role, NQR complex catalyzes the reduction of ubiquinone-1 to ubiquinol by two successive reactions, coupled with the transport of Na(+) ions from the cytoplasm to the periplasm. NqrA to NqrE are probably involved in the second step, the conversion of ubisemiquinone to ubiquinol. The protein is Na(+)-translocating NADH-quinone reductase subunit A of Hahella chejuensis (strain KCTC 2396).